A 754-amino-acid chain; its full sequence is Nibrin (754 aa).

The region spanning 24–83 (YVVGRKNCAILIEKDQSISRNHAVLTANFSVTNLSQTDEIPVLALKDNSKYGTFVNEEKM) is the FHA domain. BRCT domains are found at residues 105 to 181 (KFRI…TEFL) and 224 to 315 (GKTF…LAVI). Residues 111–328 (EPLVACSSCL…TKNYCDPQGH (218 aa)) are mediates interaction with SP100. The segment at 221–402 (IFKGKTFIFL…FRMLSQDAPT (182 aa)) is interaction with MTOR, MAPKAP1 and RICTOR. S278 bears the Phosphoserine; by ATM mark. The tract at residues 326-346 (QGHPSTGLKTTTPGPSLSQGL) is disordered. The segment covering 328-346 (HPSTGLKTTTPGPSLSQGL) has biased composition (polar residues). At T337 the chain carries Phosphothreonine. Residue S343 is modified to Phosphoserine; by ATM. S347 is subject to Phosphoserine. At K388 the chain carries N6-lactoyllysine. Disordered regions lie at residues 396–415 (LSQD…NNNS) and 431–475 (LSPT…NQEM). Position 397 is a phosphoserine (S397). Residue T402 is modified to Phosphothreonine. Composition is skewed to polar residues over residues 431–440 (LSPTKLPSIN) and 447–462 (SQQQ…FQPS). Position 432 is a phosphoserine (S432). K435 participates in a covalent cross-link: Glycyl lysine isopeptide (Lys-Gly) (interchain with G-Cter in ubiquitin). Residues 461–467 (PSTKKRE) carry the Nuclear localization signal motif. S509 and S518 each carry phosphoserine. Glycyl lysine isopeptide (Lys-Gly) (interchain with G-Cter in SUMO2) cross-links involve residues K571 and K582. Residues S615 and S673 each carry the phosphoserine modification. Residues K686, K690, and K735 each participate in a glycyl lysine isopeptide (Lys-Gly) (interchain with G-Cter in ubiquitin) cross-link. A FxF/Y motif motif is present at residues 740 to 749 (ADDLFRYNPY).

This sequence belongs to the Nibrin family. Component of the MRN complex composed of two heterodimers RAD50 and MRE11 associated with a single NBN. The MRN complexes dimerize on DNA to form joined MRN-MRN oligomers required for DNA double-strand break repair. The MRN complexes dimerize on DNA to form joined MRN-MRN oligomers required for DNA double-strand break repair. As part of the MRN complex, interacts with MCM9; the interaction recruits the complex to DNA repair sites. Component of the BASC complex, at least composed of BRCA1, MSH2, MSH6, MLH1, ATM, BLM, RAD50, MRE11 and NBN. Interacts with histone H2AX; this requires phosphorylation of H2AX on 'Ser-139' and promotes NBN recruitment to DNA damage sites. Interacts with (phosphorylated) MDC1; promoting NBN recruitment to DNA damage sites. Interacts with (phosphorylated) RAD17; promoting NBN recruitment to DNA damage sites. Interacts (via FxF/Y motif) with ATM. Interacts with HJURP. Interacts with INTS3. Interacts with KPNA2. Interacts with TERF2; interaction is disrupted upon NBN phosphorylation by CDK2. Interacts with (phosphorylated) RBBP8/CtIP; the interaction links the role of the MRN complex in DNA double-strand break sensing to resection. Interacts with SP100; recruits NBN to PML bodies. Interacts with ATF2. Interacts with MTOR, MAPKAP1 isoform 2 and RICTOR; indicative for an association with the mTORC2 complex. Interacts with MRNIP. Interacts with UFL1; promoting UFL1 recruitment to double-strand breaks following DNA damage. Interacts with CYREN (via XLF motif). In terms of processing, phosphorylated by ATM in response of ionizing radiation, and such phosphorylation is responsible intra-S phase checkpoint control and telomere maintenance. Phosphorylated at Ser-432 by CDK2 in S/G2 phases abolishes interaction with TERF2, enabling DCLRE1B/Apollo recruitment to telomeres. Phosphorylation at Ser-432 in response to dysfunctional telomeres promotes non-homologous end joining repair at telomeres, while dephosphorylation by PPP1CA promotes microhomology-mediated end-joining (MMEJ) repair. Ubiquitinated at Lys-435 via 'Lys-6'-linked ubiquitin chains by RNF8, promoting NBN recruitment to DNA double-strand breaks (DSBs). Ubiquitinated at Lys-686 and Lys-689 via 'Lys-63'-linked ubiquitin chains by PELI1: ubiquitination takes place following PELI1 phosphorylation and promotes ATM activation and DNA repair. Ubiquitinated at Lys-735 via 'Lys-63'-linked ubiquitin chains by the SCF(SKP2) complex: ubiquitination takes place following SKP2 phosphorylation and promotes ATM activation and DNA repair. Post-translationally, lactylation at Lys-388 by KAT5 in response to DNA damage promotes recruitment of the MRN complex to DNA damage sites. Delactylated by HDAC3.

The protein localises to the nucleus. Its subcellular location is the chromosome. The protein resides in the PML body. It localises to the telomere. Its function is as follows. Component of the MRN complex, which plays a central role in double-strand break (DSB) repair, DNA recombination, maintenance of telomere integrity and meiosis. The MRN complex is involved in the repair of DNA double-strand breaks (DSBs) via homologous recombination (HR), an error-free mechanism which primarily occurs during S and G2 phases. The complex (1) mediates the end resection of damaged DNA, which generates proper single-stranded DNA, a key initial steps in HR, and is (2) required for the recruitment of other repair factors and efficient activation of ATM and ATR upon DNA damage. The MRN complex possesses single-strand endonuclease activity and double-strand-specific 3'-5' exonuclease activity, which are provided by MRE11, to initiate end resection, which is required for single-strand invasion and recombination. Within the MRN complex, NBN acts as a protein-protein adapter, which specifically recognizes and binds phosphorylated proteins, promoting their recruitment to DNA damage sites. Recruits MRE11 and RAD50 components of the MRN complex to DSBs in response to DNA damage. Promotes the recruitment of PI3/PI4-kinase family members ATM, ATR, and probably DNA-PKcs to the DNA damage sites, activating their functions. Mediates the recruitment of phosphorylated RBBP8/CtIP to DSBs, leading to cooperation between the MRN complex and RBBP8/CtIP to initiate end resection. RBBP8/CtIP specifically promotes the endonuclease activity of the MRN complex to clear DNA ends containing protein adducts. The MRN complex is also required for the processing of R-loops. NBN also functions in telomere length maintenance via its interaction with TERF2: interaction with TERF2 during G1 phase preventing recruitment of DCLRE1B/Apollo to telomeres. NBN also promotes DNA repair choice at dysfunctional telomeres: NBN phosphorylation by CK2 promotes non-homologous end joining repair at telomeres, while unphosphorylated NBN promotes microhomology-mediated end-joining (MMEJ) repair. Enhances AKT1 phosphorylation possibly by association with the mTORC2 complex. This is Nibrin (NBN) from Pongo abelii (Sumatran orangutan).